The sequence spans 125 residues: Casein kinase I isoform alpha (125 aa).

Residues 1 to 125 (GEEVAVKLES…LIDFGLAKKY (125 aa)) form the Protein kinase domain. Lysine 7 is an ATP binding site. Aspartate 97 acts as the Proton acceptor in catalysis.

It belongs to the protein kinase superfamily. CK1 Ser/Thr protein kinase family. Casein kinase I subfamily. As to quaternary structure, interacts with the Axin complex. Interacts with TUT1, leading to TUT1 phosphorylation. Interacts with FAM83A, FAM83B, FAM83C, FAM83D, FAM83E, FAM83F, FAM83G and FAM83H (via DUF1669). Interaction with FAM83H recruits CSNK1A1 to keratin filaments. Phosphorylated by MTOR in response to mitogenic stimulation, leading to its activation.

It is found in the cytoplasm. The protein resides in the cytoskeleton. The protein localises to the microtubule organizing center. Its subcellular location is the centrosome. It localises to the chromosome. It is found in the centromere. The protein resides in the kinetochore. The protein localises to the nucleus speckle. Its subcellular location is the cilium basal body. It localises to the spindle. It catalyses the reaction L-seryl-[protein] + ATP = O-phospho-L-seryl-[protein] + ADP + H(+). The enzyme catalyses L-threonyl-[protein] + ATP = O-phospho-L-threonyl-[protein] + ADP + H(+). Casein kinases are operationally defined by their preferential utilization of acidic proteins such as caseins as substrates. It can phosphorylate a large number of proteins. Participates in Wnt signaling. Phosphorylates CTNNB1 at 'Ser-45'. May phosphorylate PER1 and PER2. May play a role in segregating chromosomes during mitosis. May play a role in keratin cytoskeleton disassembly and thereby, it may regulate epithelial cell migration. Acts as a positive regulator of mTORC1 and mTORC2 signaling in response to nutrients by mediating phosphorylation of DEPTOR inhibitor. Acts as an inhibitor of NLRP3 inflammasome assembly by mediating phosphorylation of NLRP3. The protein is Casein kinase I isoform alpha (CSNK1A1) of Sus scrofa (Pig).